Consider the following 133-residue polypeptide: MSTVKFTVVEPTIFSNVSISFKEDKIILFLESKVIGTLYQTSGNILWESECPITRSSYKELSHWMKCYDCGRDFCVPKNCDYHDQIPKSIYRESVLNKYTLTIKWTNYCSLESAITKTIQVYIDLNKIETNTN.

Belongs to the mimivirus L15/L51/R83 family.

This is an uncharacterized protein from Acanthamoeba polyphaga (Amoeba).